The primary structure comprises 243 residues: Ribosomal RNA small subunit methyltransferase G (243 aa).

S-adenosyl-L-methionine contacts are provided by residues Gly82, Phe87, 133-134, and Arg152; that span reads AE.

Belongs to the methyltransferase superfamily. RNA methyltransferase RsmG family.

Its subcellular location is the cytoplasm. Specifically methylates the N7 position of a guanine in 16S rRNA. This chain is Ribosomal RNA small subunit methyltransferase G, found in Clostridium novyi (strain NT).